The sequence spans 488 residues: 3-octaprenyl-4-hydroxybenzoate carboxy-lyase (488 aa).

Residue N172 participates in Mn(2+) binding. Prenylated FMN contacts are provided by residues 175-177 (IYR), 189-191 (RWL), and 194-195 (RG). E238 contacts Mn(2+). The active-site Proton donor is D287.

The protein belongs to the UbiD family. In terms of assembly, homohexamer. It depends on prenylated FMN as a cofactor. Requires Mn(2+) as cofactor.

The protein resides in the cell membrane. It catalyses the reaction a 4-hydroxy-3-(all-trans-polyprenyl)benzoate + H(+) = a 2-(all-trans-polyprenyl)phenol + CO2. Its pathway is cofactor biosynthesis; ubiquinone biosynthesis. Functionally, catalyzes the decarboxylation of 3-octaprenyl-4-hydroxy benzoate to 2-octaprenylphenol, an intermediate step in ubiquinone biosynthesis. In Alteromonas mediterranea (strain DSM 17117 / CIP 110805 / LMG 28347 / Deep ecotype), this protein is 3-octaprenyl-4-hydroxybenzoate carboxy-lyase.